Consider the following 571-residue polypeptide: Putative fatty-acid--CoA ligase fadD11 (571 aa).

Residues 1 to 19 (MARLRGAGAAGRCRPGRFG) show a composition bias toward low complexity. 2 disordered regions span residues 1–35 (MARL…EPDR) and 67–91 (RQRG…RCAH). Residues 78-91 (ATVRRSRSRQRCAH) show a composition bias toward basic residues. 2 consecutive transmembrane segments (helical) span residues 314 to 334 (TLAF…MSEL) and 431 to 451 (ANIE…MAIG).

Belongs to the ATP-dependent AMP-binding enzyme family.

Its subcellular location is the cell membrane. The protein is Putative fatty-acid--CoA ligase fadD11 (fadD11) of Mycobacterium tuberculosis (strain CDC 1551 / Oshkosh).